A 242-amino-acid polypeptide reads, in one-letter code: Lysosomal membrane ascorbate-dependent ferrireductase CYB561A3 (242 aa).

The Cytoplasmic segment spans residues 1-7 (MVSGRFY). A helical membrane pass occupies residues 8–28 (LSCLLLGSLGSMCILFTIYWM). The Cytochrome b561 domain maps to 12–219 (LLGSLGSMCI…FGLLVLYILL (208 aa)). The Lumenal portion of the chain corresponds to 29–45 (QYWRGGFAWNGSIYMFN). The N-linked (GlcNAc...) asparagine glycan is linked to Asn38. A helical transmembrane segment spans residues 46–66 (WHPVLMVAGMVVFYGGASLVY). 2 residues coordinate heme b: His47 and Arg67. The Cytoplasmic portion of the chain corresponds to 67–83 (RLPQSWVGPKLPWKLLH). 2 residues coordinate L-ascorbate: Lys76 and Lys80. His83 lines the heme b pocket. The helical transmembrane segment at 84–104 (AALHLMAFVLTVVGLVAVFTF) threads the bilayer. The Lumenal portion of the chain corresponds to 105-119 (HNHGRTANLYSLHSW). Heme b is bound by residues 112–115 (NLYS) and His117. Residues 120–140 (LGITTVFLFACQWFLGFAVFL) form a helical membrane-spanning segment. Topologically, residues 141 to 154 (LPWASMWLRSLLKP) are cytoplasmic. Residue Arg149 participates in L-ascorbate binding. Residues 155–175 (IHVFFGAAILSLSIASVISGI) traverse the membrane as a helical segment. Heme b contacts are provided by His156 and Glu177. The Lumenal portion of the chain corresponds to 176–202 (NEKLFFSLKNTTRPYHSLPSEAVFANS). A helical membrane pass occupies residues 203 to 223 (TGMLVVAFGLLVLYILLASSW). Lys224 is a heme b binding site. Residues 224 to 242 (KRPEPGILTDRQPLLHDGE) are Cytoplasmic-facing.

Homodimer. It depends on heme b as a cofactor. N-glycosylated.

It is found in the late endosome membrane. The protein resides in the lysosome membrane. It catalyses the reaction Fe(3+)(out) + L-ascorbate(in) = monodehydro-L-ascorbate radical(in) + Fe(2+)(out) + H(+). Its function is as follows. Transmembrane reductase that uses ascorbate as an electron donor in the cytoplasm and transfers electrons across membranes to reduce iron cations Fe(3+) into Fe(2+) in the lumen of the late endosome and lysosome. Reduced iron can then be extruded from the late endosome and lysosome to the cytoplasm by divalent metal-specific transporters. It is therefore most probably involved in endosomal and lysosomal cellular iron homeostasis. The polypeptide is Lysosomal membrane ascorbate-dependent ferrireductase CYB561A3 (Homo sapiens (Human)).